The chain runs to 389 residues: Chaperone protein DnaJ (389 aa).

In terms of domain architecture, J spans K5–E79. The CR-type zinc-finger motif lies at G151 to N234. Residues C164, C167, C182, C185, C208, C211, C222, and C225 each contribute to the Zn(2+) site. 4 CXXCXGXG motif repeats span residues C164–G171, C182–G189, C208–G215, and C222–K229.

This sequence belongs to the DnaJ family. As to quaternary structure, homodimer. Requires Zn(2+) as cofactor.

The protein resides in the cytoplasm. Its function is as follows. Participates actively in the response to hyperosmotic and heat shock by preventing the aggregation of stress-denatured proteins and by disaggregating proteins, also in an autonomous, DnaK-independent fashion. Unfolded proteins bind initially to DnaJ; upon interaction with the DnaJ-bound protein, DnaK hydrolyzes its bound ATP, resulting in the formation of a stable complex. GrpE releases ADP from DnaK; ATP binding to DnaK triggers the release of the substrate protein, thus completing the reaction cycle. Several rounds of ATP-dependent interactions between DnaJ, DnaK and GrpE are required for fully efficient folding. Also involved, together with DnaK and GrpE, in the DNA replication of plasmids through activation of initiation proteins. This is Chaperone protein DnaJ from Mycoplasma genitalium (strain ATCC 33530 / DSM 19775 / NCTC 10195 / G37) (Mycoplasmoides genitalium).